We begin with the raw amino-acid sequence, 402 residues long: Plasminogen activator inhibitor 1 (402 aa).

Positions 1–22 (MQMSSALACLILGLVLVSGKGF) are cleaved as a signal peptide. Residues asparagine 232, asparagine 288, and asparagine 352 are each glycosylated (N-linked (GlcNAc...) asparagine).

It belongs to the serpin family. In terms of assembly, forms a heterodimer with TMPRSS7. Interacts with VTN. Binds LRP1B; binding is followed by internalization and degradation. Interacts with PPP1CB. In complex with PLAU/uPA, interacts with PLAUR/uPAR. Interacts with SORL1 and LRP1, either alone or in complex with PLAU; these interactions are abolished in the presence of LRPAP1/RAP. The ternary complex composed of PLAUR-PLAU-PAI1 also interacts with SORL1. Interacts with PLAT/tPA. Also interacts with SORL1, when complexed to PLAT/tPA.

It localises to the secreted. In terms of biological role, serine protease inhibitor. Inhibits TMPRSS7. Is a primary inhibitor of tissue-type plasminogen activator (PLAT) and urokinase-type plasminogen activator (PLAU). As PLAT inhibitor, it is required for fibrinolysis down-regulation and is responsible for the controlled degradation of blood clots. As PLAU inhibitor, it is involved in the regulation of cell adhesion and spreading. Acts as a regulator of cell migration, independently of its role as protease inhibitor. It is required for stimulation of keratinocyte migration during cutaneous injury repair. Involved in cellular and replicative senescence. Plays a role in alveolar type 2 cells senescence in the lung. Is involved in the regulation of cementogenic differentiation of periodontal ligament stem cells, and regulates odontoblast differentiation and dentin formation during odontogenesis. This chain is Plasminogen activator inhibitor 1 (Serpine1), found in Mus musculus (Mouse).